Consider the following 248-residue polypeptide: Coproheme decarboxylase (248 aa).

Fe-coproporphyrin III-binding positions include R130, 144 to 148 (YPMDK), H171, Q184, and S222. Y144 is an active-site residue.

The protein belongs to the ChdC family. Type 1 subfamily. In terms of assembly, homopentamer. Requires Fe-coproporphyrin III as cofactor.

It carries out the reaction Fe-coproporphyrin III + 2 H2O2 + 2 H(+) = heme b + 2 CO2 + 4 H2O. The enzyme catalyses Fe-coproporphyrin III + H2O2 + H(+) = harderoheme III + CO2 + 2 H2O. It catalyses the reaction harderoheme III + H2O2 + H(+) = heme b + CO2 + 2 H2O. The protein operates within porphyrin-containing compound metabolism; protoheme biosynthesis. In terms of biological role, involved in coproporphyrin-dependent heme b biosynthesis. Catalyzes the decarboxylation of Fe-coproporphyrin III (coproheme) to heme b (protoheme IX), the last step of the pathway. The reaction occurs in a stepwise manner with a three-propionate intermediate. This is Coproheme decarboxylase from Geobacillus kaustophilus (strain HTA426).